We begin with the raw amino-acid sequence, 196 residues long: Large ribosomal subunit protein uL14my (196 aa).

The transit peptide at 1-62 (MATALASKLS…TILKCVDNSC (62 aa)) directs the protein to the mitochondrion. Residues 148-175 (EKKGQNNSHGSKRKMEYNQPTGTRVFGP) form a disordered region.

Belongs to the universal ribosomal protein uL14 family. Part of the mitochondrial 50S ribosomal subunit. As to expression, mostly expressed in pistils and inflorescences, including floral organs and meristems, and, to a lower extent, in leaves.

It is found in the mitochondrion. Binds to 23S rRNA in mitochondrion. Required for the formation of the proximal region of the ovule primordium during floral organogenesis, thus participating in patterning and growth of ovule. Also regulates the initiation and/or maintenance of integument and embryo sac ontogenesis. Prevents inappropriate cell death in the young ovule. This chain is Large ribosomal subunit protein uL14my (HLL), found in Arabidopsis thaliana (Mouse-ear cress).